The sequence spans 386 residues: Formate-dependent phosphoribosylglycinamide formyltransferase (386 aa).

Residues E10–L11 and E70 each bind N(1)-(5-phospho-beta-D-ribosyl)glycinamide. Residues R102, K143, S148–Q153, E183–V186, and E191 each bind ATP. The ATP-grasp domain occupies D107–L298. E256 and E268 together coordinate Mg(2+). Residues D275, K346, and R353–R354 each bind N(1)-(5-phospho-beta-D-ribosyl)glycinamide.

The protein belongs to the PurK/PurT family. In terms of assembly, homodimer.

It catalyses the reaction N(1)-(5-phospho-beta-D-ribosyl)glycinamide + formate + ATP = N(2)-formyl-N(1)-(5-phospho-beta-D-ribosyl)glycinamide + ADP + phosphate + H(+). It functions in the pathway purine metabolism; IMP biosynthesis via de novo pathway; N(2)-formyl-N(1)-(5-phospho-D-ribosyl)glycinamide from N(1)-(5-phospho-D-ribosyl)glycinamide (formate route): step 1/1. Involved in the de novo purine biosynthesis. Catalyzes the transfer of formate to 5-phospho-ribosyl-glycinamide (GAR), producing 5-phospho-ribosyl-N-formylglycinamide (FGAR). Formate is provided by PurU via hydrolysis of 10-formyl-tetrahydrofolate. The sequence is that of Formate-dependent phosphoribosylglycinamide formyltransferase from Flavobacterium psychrophilum (strain ATCC 49511 / DSM 21280 / CIP 103535 / JIP02/86).